Consider the following 298-residue polypeptide: Zinc import ATP-binding protein ZnuC (298 aa).

Residues 17-232 (IELRNAGVYR…PEYVRLFGSR (216 aa)) form the ABC transporter domain. ATP is bound at residue 49 to 56 (GPNGAGKS). The interval 273–298 (RGHCHVEDGHHHDHEHHHHEGGQPRA) is disordered. Over residues 276–298 (CHVEDGHHHDHEHHHHEGGQPRA) the composition is skewed to basic and acidic residues.

The protein belongs to the ABC transporter superfamily. Zinc importer (TC 3.A.1.15.5) family. As to quaternary structure, the complex is composed of two ATP-binding proteins (ZnuC), two transmembrane proteins (ZnuB) and a solute-binding protein (ZnuA).

It is found in the cell inner membrane. It carries out the reaction Zn(2+)(out) + ATP(in) + H2O(in) = Zn(2+)(in) + ADP(in) + phosphate(in) + H(+)(in). Part of the ABC transporter complex ZnuABC involved in zinc import. Responsible for energy coupling to the transport system. The chain is Zinc import ATP-binding protein ZnuC from Brucella abortus (strain 2308).